A 429-amino-acid polypeptide reads, in one-letter code: DNA dC-&gt;dU-editing enzyme APOBEC3 (429 aa).

CMP/dCMP-type deaminase domains lie at 38-154 and 238-357; these read DRKD…AQVA and EEEF…LCSL. His71 lines the Zn(2+) pocket. The Proton donor role is filled by Glu73. The Zn(2+) site is built by Cys105, Cys108, His288, Cys316, and Cys319.

The protein belongs to the cytidine and deoxycytidylate deaminase family. Homodimer. Requires Zn(2+) as cofactor.

Its subcellular location is the cytoplasm. It carries out the reaction a 2'-deoxycytidine in single-stranded DNA + H2O + H(+) = a 2'-deoxyuridine in single-stranded DNA + NH4(+). DNA deaminase (cytidine deaminase) which acts as an inhibitor of retrovirus replication and retrotransposon mobility via deaminase-dependent and -independent mechanisms. Selectively targets single-stranded DNA and does not deaminate double-stranded DNA or single- or double-stranded RNA. The polypeptide is DNA dC-&gt;dU-editing enzyme APOBEC3 (Apobec3) (Rattus norvegicus (Rat)).